A 194-amino-acid polypeptide reads, in one-letter code: Small COPII coat GTPase SAR1B (194 aa).

Residues Phe-2 to Val-4 carry the STAR; SAR1-N-terminal activation recruitment. Required for the activation and subsequent recruitment to ER membrane motif. The mediates recruitment to ER membranes stretch occupies residues Met-10–Leu-14. 6 residues coordinate GDP: Asn-30, Ala-31, Gly-32, Lys-33, Thr-34, and Thr-35. Asn-30 is a GTP binding site. The GTP site is built by Gly-32, Lys-33, Thr-34, and Thr-35. Asp-70 contacts Mg(2+). GDP-binding residues include Lys-131, Asp-133, and Ile-172. Residues Lys-131, Asp-133, and Ile-172 each contribute to the GTP site.

It belongs to the small GTPase superfamily. SAR1 family. As to quaternary structure, homodimer; upon association with membrane. Part of the coat protein complex II/COPII, composed of SEC23/24 and SEC13/31 heterodimers, that it helps recruit and assemble on endoplasmic reticulum (ER) membranes at ER exit sites.

Its subcellular location is the endoplasmic reticulum membrane. The protein localises to the golgi apparatus. It is found in the golgi stack membrane. The protein resides in the cytoplasm. It localises to the cytosol. The enzyme catalyses GTP + H2O = GDP + phosphate + H(+). Its activity is regulated as follows. Small GTPases activation is mediated by guanine exchange factors (GEF), while inactivation through hydrolysis of the bound GTP is stimulated by GTPase activating proteins (GAP). Its function is as follows. Small GTPase that cycles between an active GTP-bound and an inactive GDP-bound state and mainly functions in vesicle-mediated endoplasmic reticulum (ER) to Golgi transport. The active GTP-bound form inserts into the endoplasmic reticulum membrane where it recruits the remainder of the coat protein complex II/COPII. The coat protein complex II assembling and polymerizing on endoplasmic reticulum membrane is responsible for both the sorting of cargos and the deformation and budding of membranes into vesicles destined to the Golgi. The sequence is that of Small COPII coat GTPase SAR1B (sarB) from Dictyostelium discoideum (Social amoeba).